We begin with the raw amino-acid sequence, 739 residues long: Lysyl oxidase homolog 3A (739 aa).

A signal peptide spans 1-25; sequence MLRSELRDMVVAMVLWGILLPFCLS. 4 consecutive SRCR domains span residues 38 to 139, 166 to 272, 293 to 393, and 403 to 511; these read FRLA…VICK, LRPL…VSCV, MRLK…VICN, and MRLT…VICS. 12 disulfide bridges follow: C64–C128, C77–C138, C108–C118, C196–C261, C209–C271, C238–C248, C318–C382, C331–C392, C362–C372, C433–C497, C446–C510, and C479–C489. N256 carries N-linked (GlcNAc...) asparagine glycosylation. N-linked (GlcNAc...) asparagine glycosylation is present at N468. The N-linked (GlcNAc...) asparagine glycan is linked to N611. The segment at residues 620-656 is a cross-link (lysine tyrosylquinone (Lys-Tyr)); it reads KASFCLEDTECHEGVSKRYECANFGEQGITVGCWDLY. Y656 carries the post-translational modification 2',4',5'-topaquinone.

This sequence belongs to the lysyl oxidase family. Cu cation is required as a cofactor. Lysine tyrosylquinone residue serves as cofactor. In terms of processing, the lysine tyrosylquinone cross-link (LTQ) is generated by condensation of the epsilon-amino group of a lysine with a topaquinone produced by oxidation of tyrosine.

The protein localises to the secreted. Its subcellular location is the extracellular space. The protein resides in the cytoplasm. It localises to the nucleus. It carries out the reaction L-lysyl-[protein] + O2 + H2O = (S)-2-amino-6-oxohexanoyl-[protein] + H2O2 + NH4(+). The catalysed reaction is N(6)-acetyl-L-lysyl-[protein] + O2 + H2O = acetamide + (S)-2-amino-6-oxohexanoyl-[protein] + H2O2. Functionally, protein-lysine 6-oxidase that mediates the oxidation of peptidyl lysine residues to allysine in target proteins. Catalyzes the post-translational oxidative deamination of peptidyl lysine residues in precursors of elastin and different types of collagens, a prerequisite in the formation of cross-links between collagens and elastin. Can mediate oxidation of lysine residues that are acetylated. Also able to catalyze deacetylation of lysine residues. This is Lysyl oxidase homolog 3A from Danio rerio (Zebrafish).